The chain runs to 222 residues: Putative germin-like protein 3-2 (222 aa).

Positions 1–22 (MAKLILATFAVVFLALAATSLA) are cleaved as a signal peptide. C32 and C50 are joined by a disulfide. N55 and N71 each carry an N-linked (GlcNAc...) asparagine glycan. Positions 64 to 212 (DGLTNAGNTT…AFQVDGGMVE (149 aa)) constitute a Cupin type-1 domain. Mn(2+)-binding residues include H112, H114, E119, and H158. An N-linked (GlcNAc...) asparagine glycan is attached at N165.

This sequence belongs to the germin family. Oligomer (believed to be a pentamer but probably hexamer).

It localises to the secreted. Its subcellular location is the extracellular space. The protein resides in the apoplast. May play a role in plant defense. Probably has no oxalate oxidase activity even if the active site is conserved. In Oryza sativa subsp. japonica (Rice), this protein is Putative germin-like protein 3-2.